Here is a 457-residue protein sequence, read N- to C-terminus: Asparagine--tRNA ligase (457 aa).

The protein belongs to the class-II aminoacyl-tRNA synthetase family. Homodimer.

Its subcellular location is the cytoplasm. The enzyme catalyses tRNA(Asn) + L-asparagine + ATP = L-asparaginyl-tRNA(Asn) + AMP + diphosphate + H(+). This chain is Asparagine--tRNA ligase, found in Phytoplasma australiense.